Reading from the N-terminus, the 109-residue chain is Glutaredoxin 4 (109 aa).

The region spanning 4-106 (LDKIKKQISE…TLLADVAAKY (103 aa)) is the Glutaredoxin domain. Residue Lys21 participates in glutathione binding. Cys29 is a [2Fe-2S] cluster binding site. Residues Arg58, Phe70, and 83 to 84 (CD) each bind glutathione.

The protein belongs to the glutaredoxin family. Monothiol subfamily. Homodimer.

The protein resides in the cytoplasm. Its function is as follows. Monothiol glutaredoxin involved in the biogenesis of iron-sulfur clusters. This is Glutaredoxin 4 (grxD) from Pasteurella multocida (strain Pm70).